We begin with the raw amino-acid sequence, 188 residues long: Elongation factor P (188 aa).

This sequence belongs to the elongation factor P family.

Its subcellular location is the cytoplasm. It participates in protein biosynthesis; polypeptide chain elongation. Functionally, involved in peptide bond synthesis. Stimulates efficient translation and peptide-bond synthesis on native or reconstituted 70S ribosomes in vitro. Probably functions indirectly by altering the affinity of the ribosome for aminoacyl-tRNA, thus increasing their reactivity as acceptors for peptidyl transferase. The polypeptide is Elongation factor P (Leptospira interrogans serogroup Icterohaemorrhagiae serovar copenhageni (strain Fiocruz L1-130)).